A 213-amino-acid polypeptide reads, in one-letter code: MITIVLLILAYLLGSIPSGLWIGQVFFQINLREHGSGNTGTTNTFRILGKKAGMATFVIDFFKGTLATLLPIIFHLQGVSPLIFGLLAVIGHTFPIFAGFKGGKAVATSAGVIFGFAPIFCLYLAIIFFGALYLGSMISLSSVTASIAAVIGVLLFPLFGFILSNYDFLFIAIILALASLIIIRHKDNIARIKNKTENLVPWGLNLTHQDPKK.

The next 6 membrane-spanning stretches (helical) occupy residues 2–22, 52–74, 81–100, 112–132, 143–163, and 164–184; these read ITIVLLILAYLLGSIPSGLWI, AGMATFVIDFFKGTLATLLPIIF, PLIFGLLAVIGHTFPIFAGF, VIFGFAPIFCLYLAIIFFGAL, VTASIAAVIGVLLFPLFGFIL, and SNYDFLFIAIILALASLIIIR.

It belongs to the PlsY family. As to quaternary structure, probably interacts with PlsX.

The protein localises to the cell membrane. It catalyses the reaction an acyl phosphate + sn-glycerol 3-phosphate = a 1-acyl-sn-glycero-3-phosphate + phosphate. It functions in the pathway lipid metabolism; phospholipid metabolism. Its function is as follows. Catalyzes the transfer of an acyl group from acyl-phosphate (acyl-PO(4)) to glycerol-3-phosphate (G3P) to form lysophosphatidic acid (LPA). This enzyme utilizes acyl-phosphate as fatty acyl donor, but not acyl-CoA or acyl-ACP. This Streptococcus pneumoniae (strain CGSP14) protein is Glycerol-3-phosphate acyltransferase.